The primary structure comprises 141 residues: Hemoglobin subunit alpha-3 (141 aa).

The residue at position 1 (serine 1) is an N-acetylserine. The 141-residue stretch at 1-141 folds into the Globin domain; it reads SLSASEKAAV…VSAVLTSKYR (141 aa). Position 58 (histidine 58) interacts with O2. Heme b is bound at residue histidine 87.

The protein belongs to the globin family. As to quaternary structure, heterotetramer of two alpha chains and two beta chains. Red blood cells.

Its function is as follows. This is a tadpole (larval) alpha chain. This Aquarana catesbeiana (American bullfrog) protein is Hemoglobin subunit alpha-3.